A 129-amino-acid chain; its full sequence is Protein yippee-like At5g53940 (129 aa).

The Yippee domain maps to Arg-12–Ile-109. 4 residues coordinate Zn(2+): Cys-16, Cys-19, Cys-72, and Cys-75.

Belongs to the yippee family.

The polypeptide is Protein yippee-like At5g53940 (Arabidopsis thaliana (Mouse-ear cress)).